Reading from the N-terminus, the 247-residue chain is Carboxy-S-adenosyl-L-methionine synthase (247 aa).

Residues tyrosine 39, 64–66 (GCS), 89–90 (DN), 117–118 (DI), asparagine 132, and arginine 199 contribute to the S-adenosyl-L-methionine site.

The protein belongs to the class I-like SAM-binding methyltransferase superfamily. Cx-SAM synthase family. In terms of assembly, homodimer.

The catalysed reaction is prephenate + S-adenosyl-L-methionine = carboxy-S-adenosyl-L-methionine + 3-phenylpyruvate + H2O. Catalyzes the conversion of S-adenosyl-L-methionine (SAM) to carboxy-S-adenosyl-L-methionine (Cx-SAM). This is Carboxy-S-adenosyl-L-methionine synthase from Escherichia coli O17:K52:H18 (strain UMN026 / ExPEC).